A 125-amino-acid chain; its full sequence is Small ribosomal subunit protein uS12c (125 aa).

It belongs to the universal ribosomal protein uS12 family. In terms of assembly, part of the 30S ribosomal subunit.

It is found in the plastid. Functionally, with S4 and S5 plays an important role in translational accuracy. Located at the interface of the 30S and 50S subunits. The protein is Small ribosomal subunit protein uS12c (rps12) of Euglena longa (Euglenophycean alga).